The following is a 298-amino-acid chain: Riboflavin transporter (298 aa).

9 helical membrane passes run 8 to 28 (LQGALWMLTAGLAFAIVNSVA), 35 to 55 (FGLPSTTVALVQYAIAIVVIL), 79 to 99 (VFLAVIGIQLWLWALAYPVPI), 101 to 121 (QGIALLMTSPLFATIGSGLWL), 125 to 145 (VGMARWVATLTGFIGAMIILE), 151 to 171 (FNLASLLPVGAAFFWASYSLM), 184 to 204 (MVVYLLLLITPFNLLLALPDW), 211 to 231 (TVWLLLIGAGVMTALAQWAIA), and 258 to 278 (WLVFGWVPPGRLWLGAAIIVL). EamA domains follow at residues 10-144 (GALW…MIIL) and 156-284 (LLPV…AFIT).

This sequence belongs to the drug/metabolite transporter (DMT) superfamily. 10 TMS drug/metabolite exporter (DME) (TC 2.A.7.3) family.

It is found in the cell membrane. Its function is as follows. Transports riboflavin into the cell. This Vibrio cholerae serotype O1 (strain ATCC 39315 / El Tor Inaba N16961) protein is Riboflavin transporter.